The primary structure comprises 362 residues: Peptide chain release factor 1 (362 aa).

Q237 is modified (N5-methylglutamine). The tract at residues 279–305 (RLQQAEDEKRRSEEESSRRNLVASGDR) is disordered. Residues 282–296 (QAEDEKRRSEEESSR) show a composition bias toward basic and acidic residues.

The protein belongs to the prokaryotic/mitochondrial release factor family. Post-translationally, methylated by PrmC. Methylation increases the termination efficiency of RF1.

It is found in the cytoplasm. Peptide chain release factor 1 directs the termination of translation in response to the peptide chain termination codons UAG and UAA. The chain is Peptide chain release factor 1 from Colwellia psychrerythraea (strain 34H / ATCC BAA-681) (Vibrio psychroerythus).